We begin with the raw amino-acid sequence, 509 residues long: Putative (R)-citramalate synthase CimA (509 aa).

The Pyruvate carboxyltransferase domain maps to 14-267 (VRIFDTTLRD…DTGIRTERLT (254 aa)).

The protein belongs to the alpha-IPM synthase/homocitrate synthase family. Homodimer.

The enzyme catalyses pyruvate + acetyl-CoA + H2O = (3R)-citramalate + CoA + H(+). Its pathway is amino-acid biosynthesis; L-isoleucine biosynthesis; 2-oxobutanoate from pyruvate: step 1/3. Catalyzes the condensation of pyruvate and acetyl-coenzyme A to form (R)-citramalate. This chain is Putative (R)-citramalate synthase CimA (cimA), found in Methanopyrus kandleri (strain AV19 / DSM 6324 / JCM 9639 / NBRC 100938).